Consider the following 406-residue polypeptide: S-adenosylmethionine synthase (406 aa).

Histidine 16 is a binding site for ATP. Aspartate 18 provides a ligand contact to Mg(2+). Glutamate 44 provides a ligand contact to K(+). L-methionine contacts are provided by glutamate 57 and glutamine 109. Residues 109-119 (QSPQIAQGVDE) form a flexible loop region. ATP-binding positions include 174–176 (DAK), 249–250 (RF), aspartate 258, 264–265 (RK), alanine 281, and lysine 285. L-methionine is bound at residue aspartate 258. L-methionine is bound at residue lysine 289.

The protein belongs to the AdoMet synthase family. Homotetramer; dimer of dimers. Mg(2+) is required as a cofactor. K(+) serves as cofactor.

It localises to the cytoplasm. It carries out the reaction L-methionine + ATP + H2O = S-adenosyl-L-methionine + phosphate + diphosphate. It participates in amino-acid biosynthesis; S-adenosyl-L-methionine biosynthesis; S-adenosyl-L-methionine from L-methionine: step 1/1. Functionally, catalyzes the formation of S-adenosylmethionine (AdoMet) from methionine and ATP. The overall synthetic reaction is composed of two sequential steps, AdoMet formation and the subsequent tripolyphosphate hydrolysis which occurs prior to release of AdoMet from the enzyme. This Sphingopyxis alaskensis (strain DSM 13593 / LMG 18877 / RB2256) (Sphingomonas alaskensis) protein is S-adenosylmethionine synthase.